We begin with the raw amino-acid sequence, 155 residues long: UPF0461 protein C5orf24 homolog (155 aa).

Positions 1 to 10 (MMHPVASSNP) are enriched in polar residues. The interval 1 to 20 (MMHPVASSNPAFCGPGKPSC) is disordered. Ser-37 carries the phosphoserine modification. The segment at 40-155 (SKYSHTVNHK…QQAFRCSSDA (116 aa)) is disordered. The span at 57–70 (DPLNETHLQTTSGR) shows a compositional bias: polar residues. Lys-75 is covalently cross-linked (Glycyl lysine isopeptide (Lys-Gly) (interchain with G-Cter in SUMO2)). Basic residues predominate over residues 80 to 92 (KKKNLNRSGKRGR). Positions 94-107 (SGTTKSAGYRTSTG) are enriched in polar residues. Ser-121 carries the post-translational modification Phosphoserine.

The protein belongs to the UPF0461 family.

The protein is UPF0461 protein C5orf24 homolog of Pongo abelii (Sumatran orangutan).